The sequence spans 308 residues: N-acetyl-gamma-glutamyl-phosphate reductase (308 aa).

The active site involves Cys117.

This sequence belongs to the NAGSA dehydrogenase family. Type 2 subfamily.

The protein resides in the cytoplasm. It carries out the reaction N-acetyl-L-glutamate 5-semialdehyde + phosphate + NADP(+) = N-acetyl-L-glutamyl 5-phosphate + NADPH + H(+). Its pathway is amino-acid biosynthesis; L-arginine biosynthesis; N(2)-acetyl-L-ornithine from L-glutamate: step 3/4. Catalyzes the NADPH-dependent reduction of N-acetyl-5-glutamyl phosphate to yield N-acetyl-L-glutamate 5-semialdehyde. The sequence is that of N-acetyl-gamma-glutamyl-phosphate reductase from Sinorhizobium fredii (strain NBRC 101917 / NGR234).